Consider the following 390-residue polypeptide: Guanidine hydrolase (390 aa).

6 residues coordinate Ni(2+): H174, D199, H201, D203, D291, and D293.

The protein belongs to the arginase family. Homohexamer. The cofactor is Ni(2+).

It localises to the cytoplasm. The enzyme catalyses guanidine + H2O = urea + NH4(+). With respect to regulation, activation of GdmH depends on the presence of the accessory proteins GhaA (Sll1078) and GhaB (Sll1079), which load nickel into the active site. Hydrolase activity is slightly activated in the presence of GTP. It does not require ATP or NAD(P)H. Addition of Ca(2+), Mn(2+), Fe(2+) or Fe(3+) has no consistent effects, whereas addition of Co(2+), Cu(2+) or Zn(2+) inhibits the activity. Functionally, catalyzes the hydrolysis of guanidine into urea and ammonium. Is highly specific for free guanidine. At pH 8, also catalyzes the release of urea from methylguanidine but with significantly reduced specific activity compared with that for guanidine. Cannot hydrolyze guanidinoacetate, guanidinopropionate, guanidinobutyrate, agmatine, arginine or creatine. Required to use guanidine as the sole nitrogen source for growth. Overexpression of the gene accelerates guanidine degradation and promotes biomass growth. The protein is Guanidine hydrolase of Synechocystis sp. (strain ATCC 27184 / PCC 6803 / Kazusa).